A 154-amino-acid polypeptide reads, in one-letter code: Transcriptional repressor NrdR (154 aa).

The segment at 3-34 (CPFCGAEDTAVADTRLNDEADVVRRRRKCNAC) is a zinc-finger region. Residues 49–139 (PQVVKKNGLR…VYRNFEDVDA (91 aa)) enclose the ATP-cone domain.

The protein belongs to the NrdR family. Zn(2+) serves as cofactor.

Negatively regulates transcription of bacterial ribonucleotide reductase nrd genes and operons by binding to NrdR-boxes. The protein is Transcriptional repressor NrdR of Dechloromonas aromatica (strain RCB).